We begin with the raw amino-acid sequence, 143 residues long: Hypoxic response protein 1 (143 aa).

2 consecutive CBS domains span residues 8-65 (MNAG…GLDP) and 73-131 (LARD…IVQF). A disulfide bond links Cys14 and Cys39. Positions 97 and 122 each coordinate Zn(2+).

In terms of assembly, homodimer.

Its subcellular location is the secreted. Functionally, unlike some other CBS-domain containing proteins does not seem to bind AMP. The protein is Hypoxic response protein 1 (hrp1) of Mycobacterium tuberculosis (strain CDC 1551 / Oshkosh).